The sequence spans 25 residues: IEHNAEEIRKTAIRTAVQNTAQQTK.

Positions Ile-1–Lys-10 are enriched in basic and acidic residues. Residues Ile-1 to Lys-25 form a disordered region. Over residues Ala-16–Lys-25 the composition is skewed to polar residues.

This chain is Unknown protein 4, found in Lonomia obliqua (Moth).